We begin with the raw amino-acid sequence, 259 residues long: UPF0246 protein PA14_18590 (259 aa).

It belongs to the UPF0246 family.

This chain is UPF0246 protein PA14_18590, found in Pseudomonas aeruginosa (strain UCBPP-PA14).